A 137-amino-acid chain; its full sequence is Nucleoside diphosphate kinase (137 aa).

The ATP site is built by Lys9, Phe57, Arg85, Thr91, Arg102, and Asn112. His115 (pros-phosphohistidine intermediate) is an active-site residue.

It belongs to the NDK family. In terms of assembly, homotetramer. Mg(2+) serves as cofactor.

The protein resides in the cytoplasm. It catalyses the reaction a 2'-deoxyribonucleoside 5'-diphosphate + ATP = a 2'-deoxyribonucleoside 5'-triphosphate + ADP. It carries out the reaction a ribonucleoside 5'-diphosphate + ATP = a ribonucleoside 5'-triphosphate + ADP. In terms of biological role, major role in the synthesis of nucleoside triphosphates other than ATP. The ATP gamma phosphate is transferred to the NDP beta phosphate via a ping-pong mechanism, using a phosphorylated active-site intermediate. The protein is Nucleoside diphosphate kinase of Geobacter sulfurreducens (strain ATCC 51573 / DSM 12127 / PCA).